We begin with the raw amino-acid sequence, 273 residues long: Large ribosomal subunit protein uL2 (273 aa).

Disordered regions lie at residues 28–53 (KPFAPLVEKNSKSGGRNNNGRITTRH) and 221–273 (RGTA…RRTK). The segment covering 39-48 (KSGGRNNNGR) has biased composition (low complexity).

The protein belongs to the universal ribosomal protein uL2 family. In terms of assembly, part of the 50S ribosomal subunit. Forms a bridge to the 30S subunit in the 70S ribosome.

In terms of biological role, one of the primary rRNA binding proteins. Required for association of the 30S and 50S subunits to form the 70S ribosome, for tRNA binding and peptide bond formation. It has been suggested to have peptidyltransferase activity; this is somewhat controversial. Makes several contacts with the 16S rRNA in the 70S ribosome. The chain is Large ribosomal subunit protein uL2 from Pectobacterium atrosepticum (strain SCRI 1043 / ATCC BAA-672) (Erwinia carotovora subsp. atroseptica).